Consider the following 365-residue polypeptide: Probable dual-specificity RNA methyltransferase RlmN (365 aa).

The active-site Proton acceptor is the Glu-108. In terms of domain architecture, Radical SAM core spans 114-352; the sequence is YPDRNTVCIS…SCTVRDTRGR (239 aa). Cys-121 and Cys-358 form a disulfide bridge. Residues Cys-128, Cys-132, and Cys-135 each coordinate [4Fe-4S] cluster. S-adenosyl-L-methionine contacts are provided by residues 179-180, Ser-213, 236-238, and Asn-315; these read GE and SLH. Catalysis depends on Cys-358, which acts as the S-methylcysteine intermediate.

Belongs to the radical SAM superfamily. RlmN family. It depends on [4Fe-4S] cluster as a cofactor.

The protein localises to the cytoplasm. It carries out the reaction adenosine(2503) in 23S rRNA + 2 reduced [2Fe-2S]-[ferredoxin] + 2 S-adenosyl-L-methionine = 2-methyladenosine(2503) in 23S rRNA + 5'-deoxyadenosine + L-methionine + 2 oxidized [2Fe-2S]-[ferredoxin] + S-adenosyl-L-homocysteine. It catalyses the reaction adenosine(37) in tRNA + 2 reduced [2Fe-2S]-[ferredoxin] + 2 S-adenosyl-L-methionine = 2-methyladenosine(37) in tRNA + 5'-deoxyadenosine + L-methionine + 2 oxidized [2Fe-2S]-[ferredoxin] + S-adenosyl-L-homocysteine. In terms of biological role, specifically methylates position 2 of adenine 2503 in 23S rRNA and position 2 of adenine 37 in tRNAs. The polypeptide is Probable dual-specificity RNA methyltransferase RlmN (Mycolicibacterium vanbaalenii (strain DSM 7251 / JCM 13017 / BCRC 16820 / KCTC 9966 / NRRL B-24157 / PYR-1) (Mycobacterium vanbaalenii)).